The following is a 368-amino-acid chain: Phospho-N-acetylmuramoyl-pentapeptide-transferase (368 aa).

The next 10 membrane-spanning stretches (helical) occupy residues 32–52 (TGGA…WIID), 79–99 (TPTM…VLWA), 102–122 (LNPY…IGFY), 142–160 (LLLE…TRLG), 176–196 (VALD…VGAG), 207–227 (GLAI…AYLA), 244–264 (AGEL…FLWF), 271–291 (IFMG…IAVA), 296–316 (IVLA…IVQV), and 345–365 (QIVI…LSTL).

The protein belongs to the glycosyltransferase 4 family. MraY subfamily. Mg(2+) serves as cofactor.

The protein resides in the cell inner membrane. It catalyses the reaction UDP-N-acetyl-alpha-D-muramoyl-L-alanyl-gamma-D-glutamyl-meso-2,6-diaminopimeloyl-D-alanyl-D-alanine + di-trans,octa-cis-undecaprenyl phosphate = di-trans,octa-cis-undecaprenyl diphospho-N-acetyl-alpha-D-muramoyl-L-alanyl-D-glutamyl-meso-2,6-diaminopimeloyl-D-alanyl-D-alanine + UMP. The protein operates within cell wall biogenesis; peptidoglycan biosynthesis. Its function is as follows. Catalyzes the initial step of the lipid cycle reactions in the biosynthesis of the cell wall peptidoglycan: transfers peptidoglycan precursor phospho-MurNAc-pentapeptide from UDP-MurNAc-pentapeptide onto the lipid carrier undecaprenyl phosphate, yielding undecaprenyl-pyrophosphoryl-MurNAc-pentapeptide, known as lipid I. The sequence is that of Phospho-N-acetylmuramoyl-pentapeptide-transferase from Nitrobacter winogradskyi (strain ATCC 25391 / DSM 10237 / CIP 104748 / NCIMB 11846 / Nb-255).